The chain runs to 248 residues: tRNA pseudouridine synthase A (248 aa).

The active-site Nucleophile is Asp-53. A substrate-binding site is contributed by Tyr-116.

It belongs to the tRNA pseudouridine synthase TruA family. In terms of assembly, homodimer.

The catalysed reaction is uridine(38/39/40) in tRNA = pseudouridine(38/39/40) in tRNA. Its function is as follows. Formation of pseudouridine at positions 38, 39 and 40 in the anticodon stem and loop of transfer RNAs. The protein is tRNA pseudouridine synthase A of Helicobacter hepaticus (strain ATCC 51449 / 3B1).